Consider the following 345-residue polypeptide: V-type proton ATPase subunit d (345 aa).

An N-acetylmethionine modification is found at Met1.

The protein belongs to the V-ATPase V0D/AC39 subunit family. V-ATPase is a heteromultimeric enzyme composed of a peripheral catalytic V1 complex (components A to H) attached to an integral membrane V0 proton pore complex (components: a, c, c', c'', d, e, f and VOA1).

It localises to the vacuole membrane. In terms of biological role, subunit of the V0 complex of vacuolar(H+)-ATPase (V-ATPase), a multisubunit enzyme composed of a peripheral complex (V1) that hydrolyzes ATP and a membrane integral complex (V0) that translocates protons. V-ATPase is responsible for acidifying and maintaining the pH of intracellular compartments. This subunit is a non-integral membrane component of the membrane pore domain and is required for proper assembly of the V0 sector. Might be involved in the regulated assembly of V1 subunits onto the membrane sector or alternatively may prevent the passage of protons through V0 pores. In Saccharomyces cerevisiae (strain ATCC 204508 / S288c) (Baker's yeast), this protein is V-type proton ATPase subunit d.